The following is a 175-amino-acid chain: B9 domain-containing protein 2 (175 aa).

In terms of domain architecture, C2 B9-type spans 2-118 (AELHIIGQII…QCVTWRPLGS (117 aa)).

It belongs to the B9D family. Part of the tectonic-like complex (also named B9 complex).

The protein localises to the cytoplasm. It is found in the cytoskeleton. Its subcellular location is the cilium basal body. The protein resides in the cilium axoneme. In terms of biological role, component of the tectonic-like complex, a complex localized at the transition zone of primary cilia and acting as a barrier that prevents diffusion of transmembrane proteins between the cilia and plasma membranes. The sequence is that of B9 domain-containing protein 2 (b9d2) from Danio rerio (Zebrafish).